A 44-amino-acid polypeptide reads, in one-letter code: Protein Tat (44 aa).

The segment at 1–44 (APEDSQSHQVSLSKQPASQAGGDPTGPKESKKKVESETETDPVP) is disordered. A compositionally biased stretch (polar residues) spans 7 to 18 (SHQVSLSKQPAS). K14 is covalently cross-linked (Glycyl lysine isopeptide (Lys-Gly) (interchain with G-Cter in ubiquitin)). The Cell attachment site motif lies at 21 to 23 (GGD). The segment covering 26-36 (GPKESKKKVES) has biased composition (basic and acidic residues).

This sequence belongs to the lentiviruses Tat family. Interacts with host CCNT1. Associates with the P-TEFb complex composed at least of Tat, P-TEFb (CDK9 and CCNT1), TAR RNA, RNA Pol II. Recruits the HATs CREBBP, TAF1/TFIID, EP300, PCAF and GCN5L2. Interacts with host KAT5/Tip60; this interaction targets the latter to degradation. Interacts with the host deacetylase SIRT1. Interacts with host capping enzyme RNGTT; this interaction stimulates RNGTT. Binds to host KDR, and to the host integrins ITGAV/ITGB3 and ITGA5/ITGB1. Interacts with host KPNB1/importin beta-1 without previous binding to KPNA1/importin alpha-1. Interacts with EIF2AK2. Interacts with host nucleosome assembly protein NAP1L1; this interaction may be required for the transport of Tat within the nucleus, since the two proteins interact at the nuclear rim. Interacts with host C1QBP/SF2P32; this interaction involves lysine-acetylated Tat. Interacts with the host chemokine receptors CCR2, CCR3 and CXCR4. Interacts with host DPP4/CD26; this interaction may trigger an anti-proliferative effect. Interacts with host LDLR. Interacts with the host extracellular matrix metalloproteinase MMP1. Interacts with host PRMT6; this interaction mediates Tat's methylation. Interacts with, and is ubiquitinated by MDM2/Hdm2. Interacts with host PSMC3 and HTATIP2. Interacts with STAB1; this interaction may overcome SATB1-mediated repression of IL2 and IL2RA (interleukin) in T cells by binding to the same domain than HDAC1. Interacts (when acetylated) with human CDK13, thereby increasing HIV-1 mRNA splicing and promoting the production of the doubly spliced HIV-1 protein Nef. Acetylation by EP300, CREBBP, GCN5L2/GCN5 and PCAF regulates the transactivation activity of Tat. In terms of processing, phosphorylated by EIF2AK2 on serine and threonine residues adjacent to the basic region important for TAR RNA binding and function. Phosphorylation of Tat by EIF2AK2 is dependent on the prior activation of EIF2AK2 by dsRNA. Post-translationally, asymmetrical arginine methylation by host PRMT6 seems to diminish the transactivation capacity of Tat and affects the interaction with host CCNT1. Polyubiquitination by MDM2 does not target Tat to degradation, but activates its transactivation function and fosters interaction with CCNT1 and TAR RNA.

It localises to the host nucleus. Its subcellular location is the host nucleolus. The protein localises to the host cytoplasm. The protein resides in the secreted. Functionally, transcriptional activator that increases RNA Pol II processivity, thereby increasing the level of full-length viral transcripts. Recognizes a hairpin structure at the 5'-LTR of the nascent viral mRNAs referred to as the transactivation responsive RNA element (TAR) and recruits the cyclin T1-CDK9 complex (P-TEFb complex) that will in turn hyperphosphorylate the RNA polymerase II to allow efficient elongation. The CDK9 component of P-TEFb and other Tat-activated kinases hyperphosphorylate the C-terminus of RNA Pol II that becomes stabilized and much more processive. Other factors such as HTATSF1/Tat-SF1, SUPT5H/SPT5, and HTATIP2 are also important for Tat's function. Besides its effect on RNA Pol II processivity, Tat induces chromatin remodeling of proviral genes by recruiting the histone acetyltransferases (HATs) CREBBP, EP300 and PCAF to the chromatin. This also contributes to the increase in proviral transcription rate, especially when the provirus integrates in transcriptionally silent region of the host genome. To ensure maximal activation of the LTR, Tat mediates nuclear translocation of NF-kappa-B by interacting with host RELA. Through its interaction with host TBP, Tat may also modulate transcription initiation. Tat can reactivate a latently infected cell by penetrating in it and transactivating its LTR promoter. In the cytoplasm, Tat is thought to act as a translational activator of HIV-1 mRNAs. Its function is as follows. Extracellular circulating Tat can be endocytosed by surrounding uninfected cells via the binding to several surface receptors such as CD26, CXCR4, heparan sulfate proteoglycans (HSPG) or LDLR. Neurons are rarely infected, but they internalize Tat via their LDLR. Endosomal low pH allows Tat to cross the endosome membrane to enter the cytosol and eventually further translocate into the nucleus, thereby inducing severe cell dysfunctions ranging from cell activation to cell death. Through its interaction with nuclear HATs, Tat is potentially able to control the acetylation-dependent cellular gene expression. Tat seems to inhibit the HAT activity of KAT5/Tip60 and TAF1, and consequently modify the expression of specific cellular genes. Modulates the expression of many cellular genes involved in cell survival, proliferation or in coding for cytokines (such as IL10) or cytokine receptors. May be involved in the derepression of host interleukin IL2 expression. Mediates the activation of cyclin-dependent kinases and dysregulation of microtubule network. Tat plays a role in T-cell and neurons apoptosis. Tat induced neurotoxicity and apoptosis probably contribute to neuroAIDS. Host extracellular matrix metalloproteinase MMP1 cleaves Tat and decreases Tat's mediated neurotoxicity. Circulating Tat also acts as a chemokine-like and/or growth factor-like molecule that binds to specific receptors on the surface of the cells, affecting many cellular pathways. In the vascular system, Tat binds to ITGAV/ITGB3 and ITGA5/ITGB1 integrins dimers at the surface of endothelial cells and competes with bFGF for heparin-binding sites, leading to an excess of soluble bFGF. Binds to KDR/VEGFR-2. All these Tat-mediated effects enhance angiogenesis in Kaposi's sarcoma lesions. The protein is Protein Tat of Human immunodeficiency virus type 1 group M subtype B (isolate BRVA) (HIV-1).